Consider the following 974-residue polypeptide: Alpha-1,4 glucan phosphorylase L-2 isozyme, chloroplastic/amyloplastic (974 aa).

The N-terminal 81 residues, 1–81 (MATFAVSGLN…LDVFQPDSTS (81 aa)), are a transit peptide targeting the chloroplast. The tract at residues 509–551 (ADVEKAADEEQEEEGKDDSKDEETEAVKAETTNEEEETEVKKV) is disordered. A compositionally biased stretch (acidic residues) spans 517–532 (EEQEEEGKDDSKDEET). Residue K820 is modified to N6-(pyridoxal phosphate)lysine.

Belongs to the glycogen phosphorylase family. Pyridoxal 5'-phosphate serves as cofactor. In terms of tissue distribution, leaves.

It is found in the plastid. Its subcellular location is the chloroplast. The protein resides in the amyloplast. The enzyme catalyses [(1-&gt;4)-alpha-D-glucosyl](n) + phosphate = [(1-&gt;4)-alpha-D-glucosyl](n-1) + alpha-D-glucose 1-phosphate. Its function is as follows. Phosphorylase is an important allosteric enzyme in carbohydrate metabolism. Enzymes from different sources differ in their regulatory mechanisms and in their natural substrates. However, all known phosphorylases share catalytic and structural properties. The polypeptide is Alpha-1,4 glucan phosphorylase L-2 isozyme, chloroplastic/amyloplastic (STP-1) (Solanum tuberosum (Potato)).